The primary structure comprises 737 residues: Translation initiation factor IF-2 (737 aa).

Basic and acidic residues predominate over residues 69-80 (EKKEEKPIRKIM). Positions 69–130 (EKKEEKPIRK…HKNKGKKKKG (62 aa)) are disordered. 2 stretches are compositionally biased toward basic residues: residues 95–108 (NNKK…KNKK) and 121–130 (HKNKGKKKKG). In terms of domain architecture, tr-type G spans 237-404 (ERPPVITIMG…TILITAEILE (168 aa)). The G1 stretch occupies residues 246–253 (GHVDHGKT). 246 to 253 (GHVDHGKT) contacts GTP. Residues 271-275 (GITQK) are G2. The interval 292 to 295 (DTPG) is G3. GTP is bound by residues 292 to 296 (DTPGH) and 346 to 349 (NKID). The G4 stretch occupies residues 346–349 (NKID). The G5 stretch occupies residues 382–384 (SAK).

Belongs to the TRAFAC class translation factor GTPase superfamily. Classic translation factor GTPase family. IF-2 subfamily.

Its subcellular location is the cytoplasm. Its function is as follows. One of the essential components for the initiation of protein synthesis. Protects formylmethionyl-tRNA from spontaneous hydrolysis and promotes its binding to the 30S ribosomal subunits. Also involved in the hydrolysis of GTP during the formation of the 70S ribosomal complex. This is Translation initiation factor IF-2 from Fusobacterium nucleatum subsp. nucleatum (strain ATCC 25586 / DSM 15643 / BCRC 10681 / CIP 101130 / JCM 8532 / KCTC 2640 / LMG 13131 / VPI 4355).